Consider the following 197-residue polypeptide: Imidazoleglycerol-phosphate dehydratase (197 aa).

It belongs to the imidazoleglycerol-phosphate dehydratase family.

It is found in the cytoplasm. The enzyme catalyses D-erythro-1-(imidazol-4-yl)glycerol 3-phosphate = 3-(imidazol-4-yl)-2-oxopropyl phosphate + H2O. The protein operates within amino-acid biosynthesis; L-histidine biosynthesis; L-histidine from 5-phospho-alpha-D-ribose 1-diphosphate: step 6/9. The protein is Imidazoleglycerol-phosphate dehydratase of Marinobacter nauticus (strain ATCC 700491 / DSM 11845 / VT8) (Marinobacter aquaeolei).